The chain runs to 183 residues: Holliday junction branch migration complex subunit RuvA (183 aa).

Positions 1-63 are domain I; sequence MIVGLIGVVE…EDAHLLYGFL (63 aa). The domain II stretch occupies residues 64–141; the sequence is EEGEKILFER…IQDETKPMHN (78 aa). N141 is a region of interest (flexible linker). Residues 141–183 form a domain III region; sequence NEVFLALESLGFKSAEINKVLKTLKPSLSIEAAIKEALQQLRS.

It belongs to the RuvA family. In terms of assembly, homotetramer. Forms an RuvA(8)-RuvB(12)-Holliday junction (HJ) complex. HJ DNA is sandwiched between 2 RuvA tetramers; dsDNA enters through RuvA and exits via RuvB. An RuvB hexamer assembles on each DNA strand where it exits the tetramer. Each RuvB hexamer is contacted by two RuvA subunits (via domain III) on 2 adjacent RuvB subunits; this complex drives branch migration. In the full resolvosome a probable DNA-RuvA(4)-RuvB(12)-RuvC(2) complex forms which resolves the HJ.

The protein localises to the cytoplasm. The RuvA-RuvB-RuvC complex processes Holliday junction (HJ) DNA during genetic recombination and DNA repair, while the RuvA-RuvB complex plays an important role in the rescue of blocked DNA replication forks via replication fork reversal (RFR). RuvA specifically binds to HJ cruciform DNA, conferring on it an open structure. The RuvB hexamer acts as an ATP-dependent pump, pulling dsDNA into and through the RuvAB complex. HJ branch migration allows RuvC to scan DNA until it finds its consensus sequence, where it cleaves and resolves the cruciform DNA. The polypeptide is Holliday junction branch migration complex subunit RuvA (Helicobacter pylori (strain G27)).